We begin with the raw amino-acid sequence, 522 residues long: 2-isopropylmalate synthase (522 aa).

The Pyruvate carboxyltransferase domain maps to 5–267 (VIIFDTTLRD…HTRINHQEIY (263 aa)). Residues Asp-14, His-202, His-204, and Asn-238 each contribute to the Mn(2+) site. The regulatory domain stretch occupies residues 392 to 522 (RLDTFNVQSG…SQVKDQKETV (131 aa)).

The protein belongs to the alpha-IPM synthase/homocitrate synthase family. LeuA type 1 subfamily. Homodimer. It depends on Mn(2+) as a cofactor.

The protein localises to the cytoplasm. The enzyme catalyses 3-methyl-2-oxobutanoate + acetyl-CoA + H2O = (2S)-2-isopropylmalate + CoA + H(+). The protein operates within amino-acid biosynthesis; L-leucine biosynthesis; L-leucine from 3-methyl-2-oxobutanoate: step 1/4. In terms of biological role, catalyzes the condensation of the acetyl group of acetyl-CoA with 3-methyl-2-oxobutanoate (2-ketoisovalerate) to form 3-carboxy-3-hydroxy-4-methylpentanoate (2-isopropylmalate). The sequence is that of 2-isopropylmalate synthase from Erwinia tasmaniensis (strain DSM 17950 / CFBP 7177 / CIP 109463 / NCPPB 4357 / Et1/99).